The following is a 187-amino-acid chain: Ubiquinone biosynthesis protein COQ4 homolog, mitochondrial (187 aa).

Zn(2+) is bound by residues H77, D78, H81, and E93.

This sequence belongs to the COQ4 family. In terms of assembly, component of a multi-subunit COQ enzyme complex. Zn(2+) serves as cofactor.

The protein resides in the mitochondrion inner membrane. The catalysed reaction is a 4-hydroxy-3-methoxy-5-(all-trans-polyprenyl)benzoate + H(+) = a 2-methoxy-6-(all-trans-polyprenyl)phenol + CO2. It participates in cofactor biosynthesis; ubiquinone biosynthesis. In terms of biological role, lyase that catalyzes the C1-decarboxylation of 4-hydroxy-3-methoxy-5-(all-trans-polyprenyl)benzoic acid into 2-methoxy-6-(all-trans-polyprenyl)phenol during ubiquinone biosynthesis. This is Ubiquinone biosynthesis protein COQ4 homolog, mitochondrial from Leishmania braziliensis.